The following is a 396-amino-acid chain: Probable sugar efflux transporter (396 aa).

A run of 12 helical transmembrane segments spans residues 15-35, 50-70, 81-101, 103-123, 136-156, 170-190, 209-229, 246-266, 275-295, 299-319, 333-353, and 364-384; these read VVTL…PVGL, VGIM…PFML, LICL…SWSF, VLVI…SITA, AQAL…GLPL, FFAI…LLPL, PALM…YTAY, FATA…VIFG, ALVS…LPAA, IHLG…GLGM, VAMA…ALVG, and MIGY…IIIF.

The protein belongs to the major facilitator superfamily. SotB (TC 2.A.1.2) family.

Its subcellular location is the cell inner membrane. Functionally, involved in the efflux of sugars. The physiological role may be the reduction of the intracellular concentration of toxic sugars or sugar metabolites. This Escherichia coli O127:H6 (strain E2348/69 / EPEC) protein is Probable sugar efflux transporter.